We begin with the raw amino-acid sequence, 263 residues long: Apolipoprotein A-I (263 aa).

The signal sequence occupies residues Met1–Ala18. Repeat copies occupy residues Leu66 to Gly87 and Pro88 to Asn109. The tract at residues Leu66–Gln263 is 10 X approximate tandem repeats. A Methionine sulfoxide modification is found at Met108. The stretch at Lys110–Gln120 is one 3; half-length repeat. Tandem repeats lie at residues Pro121–Glu142, Pro143–Thr164, Pro165–Gly186, Pro187–Ser206, and Ala207–Lys228. The stretch at Pro229–Leu239 is one 9; half-length repeat. Repeat 10 spans residues Pro240–Gln263.

This sequence belongs to the apolipoprotein A1/A4/E family. As to quaternary structure, homodimer. Interacts with APOA1BP and CLU. Component of a sperm activating protein complex (SPAP), consisting of APOA1, an immunoglobulin heavy chain, an immunoglobulin light chain and albumin. Interacts with NDRG1. Interacts with SCGB3A2. Interacts with NAXE and YJEFN3. Glycosylated. Post-translationally, palmitoylated. In terms of processing, phosphorylation sites are present in the extracellular medium.

It localises to the secreted. Participates in the reverse transport of cholesterol from tissues to the liver for excretion by promoting cholesterol efflux from tissues and by acting as a cofactor for the lecithin cholesterol acyltransferase (LCAT). As part of the SPAP complex, activates spermatozoa motility. In Octodon degus (Degu), this protein is Apolipoprotein A-I (APOA1).